A 702-amino-acid chain; its full sequence is Elongation factor G 1 (702 aa).

The 283-residue stretch at 8–290 (ERYRNIGISA…AVIDFLPSPV (283 aa)) folds into the tr-type G domain. GTP is bound by residues 17–24 (AHIDAGKT), 88–92 (DTPGH), and 142–145 (NKMD).

The protein belongs to the TRAFAC class translation factor GTPase superfamily. Classic translation factor GTPase family. EF-G/EF-2 subfamily.

It localises to the cytoplasm. Its function is as follows. Catalyzes the GTP-dependent ribosomal translocation step during translation elongation. During this step, the ribosome changes from the pre-translocational (PRE) to the post-translocational (POST) state as the newly formed A-site-bound peptidyl-tRNA and P-site-bound deacylated tRNA move to the P and E sites, respectively. Catalyzes the coordinated movement of the two tRNA molecules, the mRNA and conformational changes in the ribosome. The polypeptide is Elongation factor G 1 (Cupriavidus pinatubonensis (strain JMP 134 / LMG 1197) (Cupriavidus necator (strain JMP 134))).